The sequence spans 883 residues: Collagen, type I, alpha 1b (883 aa).

The segment at 1 to 883 is disordered; the sequence is QMSYVDHSKS…LGGSNDVELR (883 aa). Over residues 13–33 the composition is skewed to pro residues; that stretch reads PPQPGPMGPMGPRGPPGPPGS. Low complexity-rich tracts occupy residues 34-57, 113-122, and 129-140; these read SGPQ…AMGS, VPGVMGARGR, and SGARGNDGNTGP. Gly residues-rich tracts occupy residues 147–161 and 185–194; these read TGGE…GNEG and GTDGGPGAKG. 3 stretches are compositionally biased toward low complexity: residues 195–205, 214–223, and 230–248; these read SPGAAGLAGAP, AQGAVGAPGP, and PGAS…PGPA. Over residues 285–297 the composition is skewed to gly residues; it reads GADGGAGGKGAPG. Composition is skewed to low complexity over residues 310–326 and 390–402; these read ATGE…PGSK and VGAP…AGPA. Residues 415-424 are compositionally biased toward gly residues; it reads GAPGLGGPTG. Positions 425–444 are enriched in low complexity; it reads ARGAPGPAGNDGAKGEPGAA. 2 stretches are compositionally biased toward gly residues: residues 445–454 and 478–487; these read GAPGGLGAPG and GGKGGDGAPG. Low complexity predominate over residues 512–542; it reads AGPTGPRGETGPPGPAGFAGPPGADGQPGAK. Over residues 564-573 the composition is skewed to gly residues; it reads GPKGGAGPPG. Composition is skewed to low complexity over residues 574–584, 717–726, and 742–756; these read ATGFPGPAGRV, APGAVGPSGK, and SGPA…PAGA. Positions 757–771 are enriched in basic and acidic residues; the sequence is KGDRGEAGEAGDRGH. The span at 792-812 shows a compositional bias: low complexity; sequence PAGASGPAGPRGPAGSNGAPG. Residues 821–836 show a composition bias toward pro residues; it reads AGPPGPPGPAGPPGPP.

Belongs to the fibrillar collagen family.

The polypeptide is Collagen, type I, alpha 1b (Epinephelus costae (Goldblotch grouper)).